Here is a 377-residue protein sequence, read N- to C-terminus: Chaperone protein DnaJ (377 aa).

In terms of domain architecture, J spans 5–70; the sequence is DYYQILGIPK…EKRSAYDQYG (66 aa). Residues 132–210 form a CR-type zinc finger; the sequence is GIKKEIQIPT…CHGQGRVETY (79 aa). Zn(2+) contacts are provided by Cys145, Cys148, Cys162, Cys165, Cys184, Cys187, Cys198, and Cys201. 4 CXXCXGXG motif repeats span residues 145–152, 162–169, 184–191, and 198–205; these read CKTCYGSG, CSTCHGKG, CPTCHGKG, and CNLCHGQG.

Belongs to the DnaJ family. Homodimer. Zn(2+) is required as a cofactor.

It localises to the cytoplasm. Its function is as follows. Participates actively in the response to hyperosmotic and heat shock by preventing the aggregation of stress-denatured proteins and by disaggregating proteins, also in an autonomous, DnaK-independent fashion. Unfolded proteins bind initially to DnaJ; upon interaction with the DnaJ-bound protein, DnaK hydrolyzes its bound ATP, resulting in the formation of a stable complex. GrpE releases ADP from DnaK; ATP binding to DnaK triggers the release of the substrate protein, thus completing the reaction cycle. Several rounds of ATP-dependent interactions between DnaJ, DnaK and GrpE are required for fully efficient folding. Also involved, together with DnaK and GrpE, in the DNA replication of plasmids through activation of initiation proteins. This Buchnera aphidicola subsp. Acyrthosiphon pisum (strain 5A) protein is Chaperone protein DnaJ.